Here is a 224-residue protein sequence, read N- to C-terminus: Toxin coregulated pilin (224 aa).

Residues 1–25 (MQLLKQLFKKKFVKEEHDKKTGQEG) constitute a propeptide, atypical leader sequence. Met-26 carries the N-methylmethionine modification. The helical transmembrane segment at 26–46 (MTLLEVIIVLGIMGVVSAGVV) threads the bilayer. An intrachain disulfide couples Cys-145 to Cys-211.

Its subcellular location is the fimbrium. The protein localises to the membrane. Functionally, major component of the toxin co-regulated pilus (tcp) which is a type IV pilus essential for bacterial aggregation and subsequent colonization in the host small intestine. This Vibrio cholerae protein is Toxin coregulated pilin (tcpA).